Consider the following 403-residue polypeptide: Tryptophan synthase beta chain 1 (403 aa).

Residue lysine 93 is modified to N6-(pyridoxal phosphate)lysine.

This sequence belongs to the TrpB family. In terms of assembly, tetramer of two alpha and two beta chains. The cofactor is pyridoxal 5'-phosphate.

It catalyses the reaction (1S,2R)-1-C-(indol-3-yl)glycerol 3-phosphate + L-serine = D-glyceraldehyde 3-phosphate + L-tryptophan + H2O. It participates in amino-acid biosynthesis; L-tryptophan biosynthesis; L-tryptophan from chorismate: step 5/5. In terms of biological role, the beta subunit is responsible for the synthesis of L-tryptophan from indole and L-serine. The protein is Tryptophan synthase beta chain 1 (trpB1) of Methanosarcina acetivorans (strain ATCC 35395 / DSM 2834 / JCM 12185 / C2A).